The primary structure comprises 572 residues: Triacylglycerol lipase OBL1 (572 aa).

The helical transmembrane segment at 110–130 threads the bilayer; that stretch reads GYLVEFFLNLFSLNGNFLGLL. The interval 320–356 is disordered; it reads IPPSESSKSSTSFSDSDAHTGSDLSSDSERPTDTRKK. Residues 323 to 334 are compositionally biased toward low complexity; it reads SESSKSSTSFSD. The span at 346–356 shows a compositional bias: basic and acidic residues; the sequence is DSERPTDTRKK. The GXSXG signature appears at 391 to 395; the sequence is GHSLG. S393 (nucleophile) is an active-site residue. Catalysis depends on charge relay system residues D457 and H550.

Belongs to the AB hydrolase superfamily. Lipase family. Expressed in pollen grains and pollen tubes.

Its subcellular location is the lipid droplet. The protein localises to the membrane. The enzyme catalyses 1,2-di-(9Z-octadecenoyl)-glycerol + (9Z)-octadecenoate + H(+) = 1,2,3-tri-(9Z-octadecenoyl)-glycerol + H2O. The catalysed reaction is 1-(9Z-octadecenoyl)-glycerol + H2O = glycerol + (9Z)-octadecenoate + H(+). In terms of biological role, acid lipase that can hydrolyze a range of triacylglycerols without a clear preference for acyl-chains. Can also cleave 1,2-diacylglycerol, 1,3-diacylglycerol and 1-monoacylglycerol, but not phosphatidylcholine, phosphatidylethanolamine, or sterol esters. Required for pollen tube growth. Triacylglycerol hydrolysis by OBL1 may provide acyl groups for the synthesis of membrane lipids in growing pollen tubes. This is Triacylglycerol lipase OBL1 from Nicotiana tabacum (Common tobacco).